The primary structure comprises 833 residues: Ventricular zone-expressed PH domain-containing protein 1 (833 aa).

Interaction with TGFBR1 regions lie at residues Ala201–Met319 and Glu663–Leu833. In terms of domain architecture, PH spans Gln716–Ala819.

The protein belongs to the MELT/VEPH family. As to quaternary structure, interacts with TGFBR1. As to expression, specifically expressed in kidney and eye. In the eye, expressed in retinal pigmented epithelium but not in the neural retina.

The protein resides in the cell membrane. In terms of biological role, interacts with TGF-beta receptor type-1 (TGFBR1) and inhibits dissociation of activated SMAD2 from TGFBR1, impeding its nuclear accumulation and resulting in impaired TGF-beta signaling. May also affect FOXO, Hippo and Wnt signaling. This chain is Ventricular zone-expressed PH domain-containing protein 1 (Veph1), found in Mus musculus (Mouse).